We begin with the raw amino-acid sequence, 577 residues long: Cleavage stimulation factor subunit 2 (577 aa).

A Phosphoserine modification is found at Ser-14. Residues 16-94 (RSVFVGNIPY…RALRVDNAAS (79 aa)) enclose the RRM domain. Positions 108–248 (APVIESPYGE…VNGAPPLMQA (141 aa)) are interactions with CSTF3 and SYMPK. Residue Lys-189 forms a Glycyl lysine isopeptide (Lys-Gly) (interchain with G-Cter in SUMO2) linkage. A disordered region spans residues 207 to 230 (PVHGAGPGSGSNVSMNQQNPQAPQ). Arg-308 carries the post-translational modification Omega-N-methylarginine. A disordered region spans residues 319–409 (RGLLGDAPND…DGRGGRDPRG (91 aa)). Residues 360-373 (PGHESRGPPPHELR) are compositionally biased toward basic and acidic residues. A 1; approximate repeat occupies 410-414 (IDARG). The segment at 410–469 (IDARGMEARAMEARGLDARGLEARAMEARAMEARAMEARAMEARAMEVRGMEARGMDTRG) is 12 X 5 AA tandem repeats of M-E-A-R-[AG]. 2 repeat units span residues 415–419 (MEARA) and 420–424 (MEARG). One copy of the 4; approximate repeat lies at 425–429 (LDARG). The 5; approximate repeat unit spans residues 430–434 (LEARA). 4 tandem repeats follow at residues 435–439 (MEARA), 440–444 (MEARA), 445–449 (MEARA), and 450–454 (MEARA). One copy of the 10; approximate repeat lies at 455–459 (MEVRG). The stretch at 460–464 (MEARG) is repeat 11. The 12; approximate repeat unit spans residues 465–469 (MDTRG). 2 positions are modified to omega-N-methylarginine: Arg-468 and Arg-475. Residues 509-532 (LQGASIQGGSQPGGFSPGQNQVTP) are disordered. The tract at residues 514-577 (IQGGSQPGGF…EQIQKSTGAP (64 aa)) is interaction with RPO2TC1. Phosphoserine occurs at positions 518 and 524.

In terms of assembly, the CSTF complex is composed of CSTF1 (50 kDa subunit), CSTF2 (64 kDa subunit) and CSTF3 (77 kDa subunit). CSTF2 directly interacts with CSTF3, SYMPK and RPO2TC1. Interacts with HSF1 in heat-stressed cells. Interacts with CPSF2, CPSF3 and FIP1L1. Interacts with DDX1.

It is found in the nucleus. One of the multiple factors required for polyadenylation and 3'-end cleavage of mammalian pre-mRNAs. This subunit is directly involved in the binding to pre-mRNAs. The polypeptide is Cleavage stimulation factor subunit 2 (CSTF2) (Pongo abelii (Sumatran orangutan)).